Consider the following 196-residue polypeptide: Holliday junction branch migration complex subunit RuvA (196 aa).

The segment at 1-63 is domain I; it reads MISFVSGRVA…EDSLTLYGFA (63 aa). Positions 64–136 are domain II; the sequence is DDDERTVFEL…LKDRLGTPST (73 aa). The tract at residues 136-140 is flexible linker; the sequence is TAAAE. Positions 141 to 196 are domain III; the sequence is STSGWRDAVHAGLLNLGYTARQADEAIAAIAGELDDSAAVDTATALRLALATLKRP.

This sequence belongs to the RuvA family. In terms of assembly, homotetramer. Forms an RuvA(8)-RuvB(12)-Holliday junction (HJ) complex. HJ DNA is sandwiched between 2 RuvA tetramers; dsDNA enters through RuvA and exits via RuvB. An RuvB hexamer assembles on each DNA strand where it exits the tetramer. Each RuvB hexamer is contacted by two RuvA subunits (via domain III) on 2 adjacent RuvB subunits; this complex drives branch migration. In the full resolvosome a probable DNA-RuvA(4)-RuvB(12)-RuvC(2) complex forms which resolves the HJ.

It localises to the cytoplasm. The RuvA-RuvB-RuvC complex processes Holliday junction (HJ) DNA during genetic recombination and DNA repair, while the RuvA-RuvB complex plays an important role in the rescue of blocked DNA replication forks via replication fork reversal (RFR). RuvA specifically binds to HJ cruciform DNA, conferring on it an open structure. The RuvB hexamer acts as an ATP-dependent pump, pulling dsDNA into and through the RuvAB complex. HJ branch migration allows RuvC to scan DNA until it finds its consensus sequence, where it cleaves and resolves the cruciform DNA. The chain is Holliday junction branch migration complex subunit RuvA from Acidothermus cellulolyticus (strain ATCC 43068 / DSM 8971 / 11B).